The sequence spans 357 residues: Protein-glutamate methylesterase/protein-glutamine glutaminase 1 (357 aa).

Residues 7 to 124 enclose the Response regulatory domain; sequence KVLCVDDSAL…REGLLDYTQT (118 aa). Asp58 is modified (4-aspartylphosphate). One can recognise a CheB-type methylesterase domain in the interval 158–350; the sequence is LLSTEKLIIV…QRVMAHLATF (193 aa). Residues Ser170, His196, and Asp292 contribute to the active site.

The protein belongs to the CheB family. In terms of processing, phosphorylated by CheA. Phosphorylation of the N-terminal regulatory domain activates the methylesterase activity.

It localises to the cytoplasm. The enzyme catalyses [protein]-L-glutamate 5-O-methyl ester + H2O = L-glutamyl-[protein] + methanol + H(+). It catalyses the reaction L-glutaminyl-[protein] + H2O = L-glutamyl-[protein] + NH4(+). In terms of biological role, involved in chemotaxis. Part of a chemotaxis signal transduction system that modulates chemotaxis in response to various stimuli. Catalyzes the demethylation of specific methylglutamate residues introduced into the chemoreceptors (methyl-accepting chemotaxis proteins or MCP) by CheR. Also mediates the irreversible deamidation of specific glutamine residues to glutamic acid. The sequence is that of Protein-glutamate methylesterase/protein-glutamine glutaminase 1 from Cupriavidus metallidurans (strain ATCC 43123 / DSM 2839 / NBRC 102507 / CH34) (Ralstonia metallidurans).